The chain runs to 238 residues: Sugar fermentation stimulation protein homolog (238 aa).

This sequence belongs to the SfsA family.

The polypeptide is Sugar fermentation stimulation protein homolog (Haemophilus influenzae (strain 86-028NP)).